We begin with the raw amino-acid sequence, 338 residues long: Phytanoyl-CoA dioxygenase, peroxisomal (338 aa).

Residues 1–30 (MDYTRAGARLQVLLGHLGRPSALQIVAHPV) constitute a peroxisome transit peptide. K59 and K108 each carry N6-succinyllysine. 2-oxoglutarate contacts are provided by residues K120, M157, 175–177 (HQD), and W193. Positions 175 and 177 each coordinate Fe cation. N6-succinyllysine is present on residues K231 and K252. H264 serves as a coordination point for Fe cation. The 2-oxoglutarate site is built by S266 and R275.

This sequence belongs to the PhyH family. As to quaternary structure, interacts specifically with FKBP52 and PHYHIP. It depends on Fe cation as a cofactor. Requires L-ascorbate as cofactor. The cofactor is ATP. Mg(2+) serves as cofactor.

It is found in the peroxisome. The catalysed reaction is phytanoyl-CoA + 2-oxoglutarate + O2 = 2-hydroxyphytanoyl-CoA + succinate + CO2. It catalyses the reaction 3-methylhexadecanoyl-CoA + 2-oxoglutarate + O2 = 2-hydroxy-3-methylhexadecanoyl-CoA + succinate + CO2. The enzyme catalyses hexadecanoyl-CoA + 2-oxoglutarate + O2 = 2-hydroxyhexadecanoyl-CoA + succinate + CO2. It carries out the reaction octanoyl-CoA + 2-oxoglutarate + O2 = 2-hydroxyoctanoyl-CoA + succinate + CO2. The catalysed reaction is decanoyl-CoA + 2-oxoglutarate + O2 = 2-hydroxydecanoyl-CoA + succinate + CO2. It catalyses the reaction 3-methylbutanoyl-CoA + 2-oxoglutarate + O2 = 2-hydroxy-3-methylbutanoyl-CoA + succinate + CO2. The enzyme catalyses heptadecanoyl-CoA + 2-oxoglutarate + O2 = 2-hydroxyheptadecanoyl-CoA + succinate + CO2. It carries out the reaction eicosanoyl-CoA + 2-oxoglutarate + O2 = 2-hydroxyeicosanoyl-CoA + succinate + CO2. The catalysed reaction is octadecanoyl-CoA + 2-oxoglutarate + O2 = 2-hydroxyoctadecanoyl-CoA + succinate + CO2. It catalyses the reaction dodecanoyl-CoA + 2-oxoglutarate + O2 = 2-hydroxydodecanoyl-CoA + succinate + CO2. The enzyme catalyses tetradecanoyl-CoA + 2-oxoglutarate + O2 = 2-hydroxytetradecanoyl-CoA + succinate + CO2. It carries out the reaction hexanoyl-CoA + 2-oxoglutarate + O2 = 2-hydroxyhexanoyl-CoA + succinate + CO2. The catalysed reaction is butanoyl-CoA + 2-oxoglutarate + O2 = 2-hydroxybutanoyl-CoA + succinate + CO2. It catalyses the reaction 3-methylnonanoyl-CoA + 2-oxoglutarate + O2 = 2-hydroxy-3-methylnonanoyl-CoA + succinate + CO2. The enzyme catalyses 3-methylundecanoyl-CoA + 2-oxoglutarate + O2 = 2-hydroxy-3-methylundecanoyl-CoA + succinate + CO2. It carries out the reaction 3-methyldodecanoyl-CoA + 2-oxoglutarate + O2 = 2-hydroxy-3-methyldodecanoyl-CoA + succinate + CO2. It participates in lipid metabolism; fatty acid metabolism. Catalyzes the 2-hydroxylation of racemic phytanoyl-CoA and the isomers of 3-methylhexadecanoyl-CoA. Shows activity also towards a variety of other mono-branched 3-methylacyl-CoA esters (with a chain length of at least seven carbon atoms) and straight-chain acyl-CoA esters (with a chain length longer than four carbon atoms). Does not hydroxylate long and very long straight chain acyl-CoAs or 2-methyl-and 4-methyl-branched acyl-CoAs. This is Phytanoyl-CoA dioxygenase, peroxisomal (Phyh) from Rattus norvegicus (Rat).